The following is a 119-amino-acid chain: Early E3 13.3 kDa protein (119 aa).

This Canine adenovirus serotype 1 (strain Utrecht) (CAdV-1) protein is Early E3 13.3 kDa protein.